The following is a 404-amino-acid chain: N-acetylglucosamine-6-phosphate deacetylase (404 aa).

E143 provides a ligand contact to a divalent metal cation. A substrate-binding site is contributed by A154–H155. A divalent metal cation-binding residues include H211 and H232. Residues N235 to A236, R243, and D269 to H272 contribute to the substrate site. D294 (proton donor/acceptor) is an active-site residue. L328–G330 contacts substrate.

The protein belongs to the metallo-dependent hydrolases superfamily. NagA family. A divalent metal cation serves as cofactor.

The enzyme catalyses N-acetyl-D-glucosamine 6-phosphate + H2O = D-glucosamine 6-phosphate + acetate. The protein operates within amino-sugar metabolism; N-acetylneuraminate degradation. Its function is as follows. Hydrolyzes the N-glycolyl group from N-glycolylglucosamine 6-phosphate (GlcNGc-6-P) in the N-glycolylneuraminic acid (Neu5Gc) degradation pathway. The chain is N-acetylglucosamine-6-phosphate deacetylase (amdhd2) from Danio rerio (Zebrafish).